We begin with the raw amino-acid sequence, 604 residues long: Elongation factor 4 (604 aa).

The 182-residue stretch at K10–S191 folds into the tr-type G domain. GTP is bound by residues D22 to T27 and N138 to D141.

It belongs to the TRAFAC class translation factor GTPase superfamily. Classic translation factor GTPase family. LepA subfamily.

Its subcellular location is the cell inner membrane. It carries out the reaction GTP + H2O = GDP + phosphate + H(+). Required for accurate and efficient protein synthesis under certain stress conditions. May act as a fidelity factor of the translation reaction, by catalyzing a one-codon backward translocation of tRNAs on improperly translocated ribosomes. Back-translocation proceeds from a post-translocation (POST) complex to a pre-translocation (PRE) complex, thus giving elongation factor G a second chance to translocate the tRNAs correctly. Binds to ribosomes in a GTP-dependent manner. The protein is Elongation factor 4 of Helicobacter pylori (strain P12).